A 626-amino-acid chain; its full sequence is MLPLYLVHVLYPIGLIANLFFGSAFTIQWLLSEKRKTAYVPKAFWVLSSIGAVMMIAHGFIQSQFPMALLHGANLVIYFRNLNIASSYKLSLTTTLVILVLTLLVTTLPFALAAYYYPYMEWMASPNFFHLPLPPPNIYWHIVGCLGLFTFSSRFFIQWCYLEMNNHSTLPALFWQAGFVGGFLAFIYFIRTGDPVNILSYGCGLLPSLANLRIIYKKSRLPKFHSPSCFLSAGEPSGDTLGSDLLRNIKELNPNIHCFGVGGPLMRKEGLEPLIRMEEFQVSGFLEVFCAVFSLYKKYRKLYKAILKENPETVFCIDFPDFHFFLIRKLRKCGYRGKIIHYVCPSIWAWRPNRKKILEKHLDTLLLILPFEKEIFKDSPLKTIYLGHPLVKTIANFQDCNAWKQQLEISDQPSVALFPGSRPGDIFRNLQVQARAFRSSSLAKSHQLLVSSCNPKYDKKILELLDKEGCHNNKIVPSKFRYQLMRDCDCALAKCGTIVLEAALNQTPTIVTCLLRPFDTFLAKYIFKIFIPAYSLPNIITGSVIFPEFIGGKHDFSPEEVAAAIDILANPIGKEKQKYACQQLLKTMTENVITPKECLQAIYAQKNRFYLKNDFIKEFHPKSSRA.

The interval 1–225 is unknown; it reads MLPLYLVHVL…YKKSRLPKFH (225 aa). The tract at residues 226–626 is lipid-A-disaccharide synthase; sequence SPSCFLSAGE…KEFHPKSSRA (401 aa).

This sequence in the C-terminal section; belongs to the LpxB family.

It catalyses the reaction a lipid X + a UDP-2-N,3-O-bis[(3R)-3-hydroxyacyl]-alpha-D-glucosamine = a lipid A disaccharide + UDP + H(+). It participates in bacterial outer membrane biogenesis; LPS lipid A biosynthesis. Functionally, condensation of UDP-2,3-diacylglucosamine and 2,3-diacylglucosamine-1-phosphate to form lipid A disaccharide, a precursor of lipid A, a phosphorylated glycolipid that anchors the lipopolysaccharide to the outer membrane of the cell. The protein is Lipid-A-disaccharide synthase (lpxB) of Chlamydia caviae (strain ATCC VR-813 / DSM 19441 / 03DC25 / GPIC) (Chlamydophila caviae).